We begin with the raw amino-acid sequence, 857 residues long: Facilitated trehalose transporter Tret1-1 (857 aa).

Disordered stretches follow at residues 1-27 (MSGRDNRGAGGGGGGHQPLSNAMGKLK) and 92-203 (SFRP…KATS). Residues 1–392 (MSGRDNRGAG…VYRPTTNPIY (392 aa)) lie on the Cytoplasmic side of the membrane. Residues 134–143 (EIREHRDRQQ) are compositionally biased toward basic and acidic residues. Positions 171-181 (GNSNTNSNKAA) are enriched in polar residues. Residues Ser-248, Ser-249, Ser-250, Ser-320, and Ser-322 each carry the phosphoserine modification. Residues 327-346 (LTSRQHFQQQRSISTDSRKS) are disordered. Residues 330 to 341 (RQHFQQQRSIST) are compositionally biased toward polar residues. The chain crosses the membrane as a helical span at residues 393–413 (IWTQVLAALSVSLGSLVVGFV). At 414–440 (SAYTSPALVSMTDRNITSFEVTQDAGS) the chain is on the extracellular side. An N-linked (GlcNAc...) asparagine glycan is attached at Asn-428. The helical transmembrane segment at 441–461 (WVGGIMPLAALAGGITGGPLI) threads the bilayer. Residues 462–473 (EYLGRRNTILAT) are Cytoplasmic-facing. A helical transmembrane segment spans residues 474 to 494 (AVPFIVSSLLIACAVNVAMVL). Residues 495–497 (CGR) lie on the Extracellular side of the membrane. A helical transmembrane segment spans residues 498 to 518 (FLAGFCVGIASLSLPVYLGET). The Cytoplasmic portion of the chain corresponds to 519-528 (VQPEVRGTLG). The chain crosses the membrane as a helical span at residues 529–549 (LLPTAFGNIGILLCFVAGSFM). The N-linked (GlcNAc...) asparagine glycan is linked to Asn-550. The Extracellular portion of the chain corresponds to 550–552 (NWS). The helical transmembrane segment at 553–573 (MLAFLGAALPVPFLILMFLIP) threads the bilayer. The Cytoplasmic segment spans residues 574–636 (ETPRWFVGRG…ELLKLNNLKP (63 aa)). A helical membrane pass occupies residues 637–657 (LSISLGLMFFQQFSGINAVIF). At 658 to 673 (YTVQIFKDAGSTIDGN) the chain is on the extracellular side. A helical membrane pass occupies residues 674–694 (LCTIIVGIVNFLATFIGIVLI). The Cytoplasmic portion of the chain corresponds to 695–700 (DRAGRK). A helical transmembrane segment spans residues 701–721 (ILLYVSDIAMVLTLFVLGGFF). Over 722 to 740 (YCKANGPDVSHLGWLPLTC) the chain is Extracellular. Residues 741–761 (FVIYILGFSLGFGPIPWLMMG) form a helical membrane-spanning segment. The Cytoplasmic portion of the chain corresponds to 762 to 767 (EILPAK). A helical membrane pass occupies residues 768–788 (IRGSAASVATAFNWFCTFVVT). Residues 789–801 (KTFQDLTVAMGAH) are Extracellular-facing. Residues 802–822 (GAFWLFGAICFVGLFFVIIYV) form a helical membrane-spanning segment. Topologically, residues 823–857 (PETQGKTLEDIERKMMGRVRRMSSVANIKPLSFNM) are cytoplasmic. Phosphoserine is present on residues Ser-845 and Ser-846.

The protein belongs to the major facilitator superfamily. Sugar transporter (TC 2.A.1.1) family. Trehalose transporter subfamily.

Its subcellular location is the cell membrane. Functionally, low-capacity facilitative transporter for trehalose. Does not transport maltose, sucrose or lactose. Mediates the bidirectional transfer of trehalose. Responsible for the transport of trehalose synthesized in the fat body and the incorporation of trehalose into other tissues that require a carbon source, thereby regulating trehalose levels in the hemolymph. The chain is Facilitated trehalose transporter Tret1-1 from Drosophila sechellia (Fruit fly).